The primary structure comprises 677 residues: Methionine--tRNA ligase (677 aa).

Positions 15 to 25 (PYANGSIHLGH) match the 'HIGH' region motif. Zn(2+) contacts are provided by C146, C149, C159, and C162. The 'KMSKS' region signature appears at 333 to 337 (KMSKS). Position 336 (K336) interacts with ATP. Residues 575–677 (DFAKVDLRVA…AGAKPGHQVK (103 aa)) form the tRNA-binding domain.

This sequence belongs to the class-I aminoacyl-tRNA synthetase family. MetG type 1 subfamily. As to quaternary structure, homodimer. The cofactor is Zn(2+).

It localises to the cytoplasm. It carries out the reaction tRNA(Met) + L-methionine + ATP = L-methionyl-tRNA(Met) + AMP + diphosphate. In terms of biological role, is required not only for elongation of protein synthesis but also for the initiation of all mRNA translation through initiator tRNA(fMet) aminoacylation. The polypeptide is Methionine--tRNA ligase (Escherichia coli (strain ATCC 8739 / DSM 1576 / NBRC 3972 / NCIMB 8545 / WDCM 00012 / Crooks)).